The primary structure comprises 228 residues: MTIITPITNDPTTALLRLMAWLSPVFPAGSFSYSHGLERAVHDGLVVDAAGLQDWLQWLVRRGSGWNDAVLCAESWRCAMKGEDLHEIAELAEALAGSRERHMETMLQGGAFLAAARSWPCEIFDRLPPDCAYPVAVGAVAGGHGVPLAQALAAFLQAFCINLLQASIRLSVTGQSGVTAIMAALEPVLGETAARAALSSMEDLGSATFIADIMAMKHETQHSRLFRS.

This sequence belongs to the UreF family. UreD, UreF and UreG form a complex that acts as a GTP-hydrolysis-dependent molecular chaperone, activating the urease apoprotein by helping to assemble the nickel containing metallocenter of UreC. The UreE protein probably delivers the nickel.

Its subcellular location is the cytoplasm. Its function is as follows. Required for maturation of urease via the functional incorporation of the urease nickel metallocenter. This is Urease accessory protein UreF from Brucella ovis (strain ATCC 25840 / 63/290 / NCTC 10512).